The sequence spans 2299 residues: MAHVNGYVLSASASASASAPTSIPASVPASAPPSSSAPHAARHKLADHFIGRNRVENALAGPVKDFVKSHDGHTVITNVLIANNGIAAVKEMRSVRKWAYETFGDERAIKFTVMATPEDLAANADYIRMADHYVEVPGGTNNHNYANVELIVDIAERIDVHAVWAGWGHASENPRLPESLAASPKKIVFIGPPGSAMRSLGDKISSTIVAQHAKVPCIPWSGSGVDQVAIDADGIVTVDDEVYQKGCVQSWEEGLQKAKEIGFPVMIKASEGGGGKGIRKCEQEEGFEALYNAASSEIPGSPIFIMKLAGNARHLEVQLLADQYGNNISLFGRDCSVQRRHQKIIEEAPATVAKPEIFEAMEKAAVRLGRLVGYVSAGTVEYLYSSADNEFYFLELNPRLQVEHPTTEMVTGVNLPAAQLQIAMGLPLYRIHDIRLLYGVDQQAASEIDFDFSQESSFQTQQRPKPKGHTIACRITSEDPEDGFKPSSGIVHDLNFRSSSNVWGYFSVSNTSSIHSFSDSQFGHIFAYGKTRSASRKHMVVALKELSIRGDFRTTVEYLIKLLETPAFDNNVFTTGWLDELITKKLTVKRPDPVLVTICGAVCKAHLASEASFAEYQTSLEKGQVPPIDTLKTVFPIDFIYDSYYYRFTATRSSLDSYYLFINGSKCSVGVRNLSDGGLLVLLDGQSHTIYWKEEIAATRLSIDGKICLLEQENDPTQLRTSSPGKLVKYTIENGAHIKAGEAFAEVEVMKMYMPILAQEDGVVQLTKQPGTMLEPGDVLGILTLDDPARVKQAAQPFLNPLPDLGPPQVVGTKPAQRFRLLYNILTNILDGFDNQFVMASTLKELIDVLRDPELPYSEWSAQFSAFYSRIPQRLMASFTQIINRARASKSEFPAKSLSKALQRFREGDIVLLKSTLAPLIEVTERYDEGLKTHEFYVFSMLLEQYTAVERQFSSRTASDEEVILRLRDENKNNLFKVIQAILSHNKIRAKNNLILAILDEYKPTNLNAGNVAKYFFPAVRKITEIESRQVAKVALKAREVLIQCALPSVEERVVQMKHILQSSVVESRYSETGWEYREPVLEVLKELVDSKYTIFDVLPIFFTHQDVWVSRAALEVYVRRAYRAYSLKKVQYHNKSGDYPHVVSWDFMRGKMGASELDMEMSSQLSTPSTPATPPTPPYENGKQSKGVGSISDMSNLIENPDKEPTRKGVIVPVHDLEEAEEYLMHALQILPGIGERKKSHNGLLPDLANKRQPSILGPDGSDELSTVCNVAISDTENLDDKELLLCIQRIVNLYKNELLARCVRQLTFICGHKDGTYPGYYTFCGPEYDEDQSIRHSEPALAFQLERDRLSNFNIKPVFTTNRNIHIYEAISREMQSDKRYFTRAVIRQGRLQDKIPTTDYLLSEASRVINDTLDALEIIGNNSSDLNHIFLNFLPVFLSQPLEVEKALSGLLERFRSRLWRMRVTGIEIYITYIDLLTSVAHPLRVVITNTSGHVFQVEMYVEHRSEKDGKWVFQSISSTTKIGALHLQPASTPYPTKALEWLQPKRYKAHLMGTQYVYDFPELFRQAIHNSWTKIVCKYPSIGEKQPPADGYINYTEIILDDHDNLVEVVREPGTNTHGLVAWIMTARTVEYPRGRQFMIIANDITFRVGSFGPKENDFFYKCTEYARNLGIPRIYLCANSGARIGIAEELVPYFNVAWNNPENPEAGFKYLYLTPEDKKKFETQGVVTEEVIENRETRYKIIMIADAKDGHGMDCLKGSALIAAVTSRAYEDIFTITLVTCRSVAACHAHPLLGIGSYLVRLGQRAIQIEGHPMILTGAPAINKVLGQEVYTSNLQLGGTQIMYKNGVSHMTVNDDFEGVSKIVEWLAFVPEKKNTLVPIGPMIDPWDRDIVCSPSKQSYDVRCLIEGMETADGFQSGFFDRDSFVESLGGWAKTVVVGRARLGGIPMGIIAVETRTVENITPANPANGNSTEQIAIEAGGVWYPNSAFKTAQAIKDFNHGEQLPLMVLANWRGFSGGQKDMYDEILKYGSYILDAFIKYEQPVFVYIPPFAQVRGGSWVVLDPVLNQEFMEMYADEDARCGILEPEGVVNVRYRQDKQLETMARLDPEYRALRQKLADPSLSKEEMDDTKAKATAREQLLLPIYLQVSLQFADLHDRAGCMTAKHLIRTELKWRDARRFFYWRVRRRVLEEHILKRIATSSKNPRINRGRNLASLAAWTGIPNFSTADREVALWYEENQKLVDEKVENLKTEGVAYDVASLLRVDSKGGLKGVRHVLSMLSAKEREEALQFLN.

Over residues 21–39 the composition is skewed to low complexity; it reads TSIPASVPASAPPSSSAPH. The segment at 21–41 is disordered; the sequence is TSIPASVPASAPPSSSAPHAA. The Biotin carboxylation domain maps to 75 to 583; sequence VITNVLIANN…TTGWLDELIT (509 aa). In terms of domain architecture, ATP-grasp 1 spans 227 to 424; sequence QVAIDADGIV…LPAAQLQIAM (198 aa). Residue 258-315 participates in ATP binding; the sequence is AKEIGFPVMIKASEGGGGKGIRKCEQEEGFEALYNAASSEIPGSPIFIMKLAGNARHL. E381, E395, and N397 together coordinate Mg(2+). 3 residues coordinate Mn(2+): E381, E395, and N397. One can recognise a Biotinyl-binding domain in the interval 710–784; it reads LEQENDPTQL…EPGDVLGILT (75 aa). Position 751 is an N6-biotinyllysine (K751). The interval 1159–1208 is disordered; it reads DMEMSSQLSTPSTPATPPTPPYENGKQSKGVGSISDMSNLIENPDKEPTR. Residues 1539–1887 enclose the CoA carboxyltransferase N-terminal domain; sequence PTKALEWLQP…KKNTLVPIGP (349 aa). One can recognise a CoA carboxyltransferase C-terminal domain in the interval 1891-2205; sequence PWDRDIVCSP…EEHILKRIAT (315 aa).

It depends on biotin as a cofactor. Mg(2+) serves as cofactor. The cofactor is Mn(2+).

The enzyme catalyses hydrogencarbonate + acetyl-CoA + ATP = malonyl-CoA + ADP + phosphate + H(+). It carries out the reaction N(6)-biotinyl-L-lysyl-[protein] + hydrogencarbonate + ATP = N(6)-carboxybiotinyl-L-lysyl-[protein] + ADP + phosphate + H(+). The protein operates within secondary metabolite biosynthesis. Its pathway is lipid metabolism; malonyl-CoA biosynthesis; malonyl-CoA from acetyl-CoA: step 1/1. In terms of biological role, acetyl-CoA carboxylase; part of the gene cluster that mediates the biosynthesis of the dimeric xanthones cryptosporioptides. The pathway begins with the synthesis of atrochrysone thioester by the polyketide synthase dmx-nrPKS. The atrochrysone carboxyl ACP thioesterase dmxR1 then breaks the thioester bond and releases the atrochrysone carboxylic acid from dmx-nrPKS. Atrochrysone carboxylic acid is decarboxylated by the decarboxylase dmxR15, and oxidized by the anthrone oxygenase dmxR16 to yield emodin. Emodin is then reduced to emodin hydroquinone by the oxidoreductase dmxR7. A-ring reduction by the short chain dehydrogenase dmxR18, dehydration by the scytalone dehydratase-like protein dmxR17 and probable spontaneous re-oxidation, results in overall deoxygenation to chrysophanol. Baeyer-Villiger oxidation by the Baeyer-Villiger monooxygenase (BVMO) dmxR6 then yields monodictylactone in equilibrium with monodictyphenone. In the case of the cryptosporioptides biosynthesis, monodictylactone is reduced at C-12 to an alcohol (by the short chain dehydrogenases dmxR12 or dmxR8) and hydroxylated at C-5 by dmxR9, yielding the electron-rich aromatic which could eliminate H(2)O to form the ortho-quinonemethide, followed by tautomerisation to paraquinone and complete the formal reduction to produce the 10-methylgroup. Conjugate addition of C-4a-OH to the resulting paraquinone by the monooxygenase dmxR10 then gives cyclohexadienone, which is then reduced at C-5 by the short chain dehydrogenase dmxR3 to give the dihydroxanthone. The 6,7-epoxide in the cryptosporioptides could be introduced by the cytochrome P450 monooxygenase dmxL3. The highly reducing PKS dmxL2 manufactures butyrate, which is further carboxylated by dmxL1 to form ethylmalonate. It is not yet clear whether the carboxylation occurs while the butyrate is attached to the ACP of dmxL2, but this unusual fungal metabolite could then be esterified to O-5 by the O-acetyltransferase dmxR13. Finally, dimerization performed by dmxR5 gives the observed dimers cryptosporioptides A, B and C as the final products of the pathway. In Cryptosporiopsis sp. (strain 8999), this protein is Acetyl-CoA carboxylase dmxL1.